An 882-amino-acid polypeptide reads, in one-letter code: Alanine--tRNA ligase (882 aa).

Zn(2+) contacts are provided by H571, H575, C673, and H677.

The protein belongs to the class-II aminoacyl-tRNA synthetase family. It depends on Zn(2+) as a cofactor.

It localises to the cytoplasm. The catalysed reaction is tRNA(Ala) + L-alanine + ATP = L-alanyl-tRNA(Ala) + AMP + diphosphate. Its function is as follows. Catalyzes the attachment of alanine to tRNA(Ala) in a two-step reaction: alanine is first activated by ATP to form Ala-AMP and then transferred to the acceptor end of tRNA(Ala). Also edits incorrectly charged Ser-tRNA(Ala) and Gly-tRNA(Ala) via its editing domain. This chain is Alanine--tRNA ligase, found in Desulfotalea psychrophila (strain LSv54 / DSM 12343).